Here is a 406-residue protein sequence, read N- to C-terminus: Tyrosine--tRNA ligase (406 aa).

Tyr-35 provides a ligand contact to L-tyrosine. Residues Pro-40 to His-49 carry the 'HIGH' region motif. Residues Tyr-168 and Gln-172 each coordinate L-tyrosine. The 'KMSKS' region motif lies at Lys-228–Ser-232. Lys-231 is a binding site for ATP. The S4 RNA-binding domain occupies Ile-339–Phe-405.

This sequence belongs to the class-I aminoacyl-tRNA synthetase family. TyrS type 1 subfamily. As to quaternary structure, homodimer.

The protein resides in the cytoplasm. The catalysed reaction is tRNA(Tyr) + L-tyrosine + ATP = L-tyrosyl-tRNA(Tyr) + AMP + diphosphate + H(+). Functionally, catalyzes the attachment of tyrosine to tRNA(Tyr) in a two-step reaction: tyrosine is first activated by ATP to form Tyr-AMP and then transferred to the acceptor end of tRNA(Tyr). The chain is Tyrosine--tRNA ligase from Treponema denticola (strain ATCC 35405 / DSM 14222 / CIP 103919 / JCM 8153 / KCTC 15104).